The sequence spans 102 residues: Small ribosomal subunit protein uS10 (102 aa).

The protein belongs to the universal ribosomal protein uS10 family. As to quaternary structure, part of the 30S ribosomal subunit.

Its function is as follows. Involved in the binding of tRNA to the ribosomes. The sequence is that of Small ribosomal subunit protein uS10 from Cupriavidus metallidurans (strain ATCC 43123 / DSM 2839 / NBRC 102507 / CH34) (Ralstonia metallidurans).